The primary structure comprises 211 residues: 3,4-dihydroxy-2-butanone 4-phosphate synthase (211 aa).

D-ribulose 5-phosphate-binding positions include 37-38 (RE), Asp-42, 150-154 (RIGHT), and Glu-174. Glu-38 is a Mg(2+) binding site. His-153 lines the Mg(2+) pocket.

This sequence belongs to the DHBP synthase family. In terms of assembly, homodimer. The cofactor is Mg(2+). It depends on Mn(2+) as a cofactor.

The catalysed reaction is D-ribulose 5-phosphate = (2S)-2-hydroxy-3-oxobutyl phosphate + formate + H(+). Its pathway is cofactor biosynthesis; riboflavin biosynthesis; 2-hydroxy-3-oxobutyl phosphate from D-ribulose 5-phosphate: step 1/1. Functionally, catalyzes the conversion of D-ribulose 5-phosphate to formate and 3,4-dihydroxy-2-butanone 4-phosphate. This is 3,4-dihydroxy-2-butanone 4-phosphate synthase from Buchnera aphidicola subsp. Baizongia pistaciae (strain Bp).